A 417-amino-acid polypeptide reads, in one-letter code: UDP-N-acetylglucosamine 1-carboxyvinyltransferase (417 aa).

22–23 (KN) contributes to the phosphoenolpyruvate binding site. Arginine 91 is a binding site for UDP-N-acetyl-alpha-D-glucosamine. The active-site Proton donor is cysteine 115. At cysteine 115 the chain carries 2-(S-cysteinyl)pyruvic acid O-phosphothioketal. UDP-N-acetyl-alpha-D-glucosamine is bound by residues 120–124 (RPVDL), aspartate 304, and isoleucine 326.

The protein belongs to the EPSP synthase family. MurA subfamily.

It localises to the cytoplasm. It catalyses the reaction phosphoenolpyruvate + UDP-N-acetyl-alpha-D-glucosamine = UDP-N-acetyl-3-O-(1-carboxyvinyl)-alpha-D-glucosamine + phosphate. Its pathway is cell wall biogenesis; peptidoglycan biosynthesis. Functionally, cell wall formation. Adds enolpyruvyl to UDP-N-acetylglucosamine. This chain is UDP-N-acetylglucosamine 1-carboxyvinyltransferase, found in Nitratidesulfovibrio vulgaris (strain DSM 19637 / Miyazaki F) (Desulfovibrio vulgaris).